The primary structure comprises 747 residues: Phosphoribosylformylglycinamidine synthase subunit PurL (747 aa).

Residue His-46 is part of the active site. The ATP site is built by Tyr-49 and Lys-88. Glu-90 lines the Mg(2+) pocket. Substrate contacts are provided by residues 91 to 94 (SHNH) and Arg-113. The Proton acceptor role is filled by His-92. Asp-114 is a Mg(2+) binding site. A substrate-binding site is contributed by Gln-237. Asp-265 is a binding site for Mg(2+). 309–311 (ESQ) is a substrate binding site. ATP contacts are provided by Asp-493 and Gly-530. Asn-531 serves as a coordination point for Mg(2+). Position 533 (Ser-533) interacts with substrate.

It belongs to the FGAMS family. As to quaternary structure, monomer. Part of the FGAM synthase complex composed of 1 PurL, 1 PurQ and 2 PurS subunits.

Its subcellular location is the cytoplasm. It carries out the reaction N(2)-formyl-N(1)-(5-phospho-beta-D-ribosyl)glycinamide + L-glutamine + ATP + H2O = 2-formamido-N(1)-(5-O-phospho-beta-D-ribosyl)acetamidine + L-glutamate + ADP + phosphate + H(+). It functions in the pathway purine metabolism; IMP biosynthesis via de novo pathway; 5-amino-1-(5-phospho-D-ribosyl)imidazole from N(2)-formyl-N(1)-(5-phospho-D-ribosyl)glycinamide: step 1/2. Part of the phosphoribosylformylglycinamidine synthase complex involved in the purines biosynthetic pathway. Catalyzes the ATP-dependent conversion of formylglycinamide ribonucleotide (FGAR) and glutamine to yield formylglycinamidine ribonucleotide (FGAM) and glutamate. The FGAM synthase complex is composed of three subunits. PurQ produces an ammonia molecule by converting glutamine to glutamate. PurL transfers the ammonia molecule to FGAR to form FGAM in an ATP-dependent manner. PurS interacts with PurQ and PurL and is thought to assist in the transfer of the ammonia molecule from PurQ to PurL. In Deinococcus radiodurans (strain ATCC 13939 / DSM 20539 / JCM 16871 / CCUG 27074 / LMG 4051 / NBRC 15346 / NCIMB 9279 / VKM B-1422 / R1), this protein is Phosphoribosylformylglycinamidine synthase subunit PurL.